Here is a 323-residue protein sequence, read N- to C-terminus: Ribosomal RNA small subunit methyltransferase H (323 aa).

S-adenosyl-L-methionine-binding positions include 44–46 (AGH), Asp64, Tyr91, Asp112, and Gln119.

The protein belongs to the methyltransferase superfamily. RsmH family.

The protein localises to the cytoplasm. It carries out the reaction cytidine(1402) in 16S rRNA + S-adenosyl-L-methionine = N(4)-methylcytidine(1402) in 16S rRNA + S-adenosyl-L-homocysteine + H(+). Functionally, specifically methylates the N4 position of cytidine in position 1402 (C1402) of 16S rRNA. The chain is Ribosomal RNA small subunit methyltransferase H from Nitratidesulfovibrio vulgaris (strain ATCC 29579 / DSM 644 / CCUG 34227 / NCIMB 8303 / VKM B-1760 / Hildenborough) (Desulfovibrio vulgaris).